A 216-amino-acid chain; its full sequence is Peptide methionine sulfoxide reductase MsrA (216 aa).

Cysteine 54 is a catalytic residue.

It belongs to the MsrA Met sulfoxide reductase family.

The catalysed reaction is L-methionyl-[protein] + [thioredoxin]-disulfide + H2O = L-methionyl-(S)-S-oxide-[protein] + [thioredoxin]-dithiol. The enzyme catalyses [thioredoxin]-disulfide + L-methionine + H2O = L-methionine (S)-S-oxide + [thioredoxin]-dithiol. In terms of biological role, has an important function as a repair enzyme for proteins that have been inactivated by oxidation. Catalyzes the reversible oxidation-reduction of methionine sulfoxide in proteins to methionine. The sequence is that of Peptide methionine sulfoxide reductase MsrA from Xanthomonas oryzae pv. oryzae (strain PXO99A).